Reading from the N-terminus, the 174-residue chain is MKVAVGTVNPVKVNAVKNVFGKLFDNVEVEGRKVGSGVPDQPFGSETIKGAINRAKNAYRTGDYDYGVGIEAGLTDVEGYVLDIQFCAVFDGLDCTTGCGSGFQYPPTVLAEVLTGREVGDVMSELTGIENLGQKMGAIGYLSRGMLDRTQLTEQSVLMAMIPRLNPKLYRQID.

Mg(2+) is bound at residue aspartate 63.

It belongs to the YjjX NTPase family. Homodimer. Mg(2+) is required as a cofactor. It depends on Mn(2+) as a cofactor.

The catalysed reaction is XTP + H2O = XDP + phosphate + H(+). The enzyme catalyses ITP + H2O = IDP + phosphate + H(+). Its function is as follows. Phosphatase that hydrolyzes non-canonical purine nucleotides such as XTP and ITP to their respective diphosphate derivatives. Probably excludes non-canonical purines from DNA/RNA precursor pool, thus preventing their incorporation into DNA/RNA and avoiding chromosomal lesions. The polypeptide is Probable inosine/xanthosine triphosphatase (Methanocella arvoryzae (strain DSM 22066 / NBRC 105507 / MRE50)).